The primary structure comprises 163 residues: Small ribosomal subunit protein uS7 (163 aa).

Belongs to the universal ribosomal protein uS7 family. In terms of assembly, part of the 30S ribosomal subunit. Contacts proteins S9 and S11.

In terms of biological role, one of the primary rRNA binding proteins, it binds directly to 16S rRNA where it nucleates assembly of the head domain of the 30S subunit. Is located at the subunit interface close to the decoding center, probably blocks exit of the E-site tRNA. This is Small ribosomal subunit protein uS7 from Rickettsia bellii (strain RML369-C).